The sequence spans 199 residues: Recombination protein RecR (199 aa).

The segment at 58 to 73 (CRICYNITDTEVCNIC) adopts a C4-type zinc-finger fold. Residues 81–176 (SLICVVSHPM…KVTRIAHGVP (96 aa)) form the Toprim domain.

It belongs to the RecR family.

May play a role in DNA repair. It seems to be involved in an RecBC-independent recombinational process of DNA repair. It may act with RecF and RecO. This is Recombination protein RecR from Thermoanaerobacter pseudethanolicus (strain ATCC 33223 / 39E) (Clostridium thermohydrosulfuricum).